The sequence spans 79 residues: uncharacterized protein (79 aa).

This is an uncharacterized protein from Methanocaldococcus jannaschii (strain ATCC 43067 / DSM 2661 / JAL-1 / JCM 10045 / NBRC 100440) (Methanococcus jannaschii).